We begin with the raw amino-acid sequence, 968 residues long: RNA polymerase-associated protein RapA (968 aa).

In terms of domain architecture, Helicase ATP-binding spans 164–334 (DVGRRHAPRV…FARLRLLDPN (171 aa)). 177–184 (DEVGLGKT) provides a ligand contact to ATP. The DEAH box motif lies at 280–283 (DEAH). In terms of domain architecture, Helicase C-terminal spans 490-644 (RVEWLMGYLT…TCPTGRAIYD (155 aa)).

Belongs to the SNF2/RAD54 helicase family. RapA subfamily. As to quaternary structure, interacts with the RNAP. Has a higher affinity for the core RNAP than for the holoenzyme. Its ATPase activity is stimulated by binding to RNAP.

In terms of biological role, transcription regulator that activates transcription by stimulating RNA polymerase (RNAP) recycling in case of stress conditions such as supercoiled DNA or high salt concentrations. Probably acts by releasing the RNAP, when it is trapped or immobilized on tightly supercoiled DNA. Does not activate transcription on linear DNA. Probably not involved in DNA repair. The protein is RNA polymerase-associated protein RapA of Salmonella arizonae (strain ATCC BAA-731 / CDC346-86 / RSK2980).